The sequence spans 426 residues: D-tagatose-1,6-bisphosphate aldolase subunit KbaZ (426 aa).

The protein belongs to the GatZ/KbaZ family. KbaZ subfamily. In terms of assembly, forms a complex with KbaY.

It functions in the pathway carbohydrate metabolism; D-tagatose 6-phosphate degradation; D-glyceraldehyde 3-phosphate and glycerone phosphate from D-tagatose 6-phosphate: step 2/2. Component of the tagatose-1,6-bisphosphate aldolase KbaYZ that is required for full activity and stability of the Y subunit. Could have a chaperone-like function for the proper and stable folding of KbaY. When expressed alone, KbaZ does not show any aldolase activity. The polypeptide is D-tagatose-1,6-bisphosphate aldolase subunit KbaZ (Escherichia coli O6:K15:H31 (strain 536 / UPEC)).